The sequence spans 518 residues: GMP synthase [glutamine-hydrolyzing] (518 aa).

The region spanning 8–201 is the Glutamine amidotransferase type-1 domain; the sequence is TVLIIDFGSQ…VCKISGIKNN (194 aa). Residue cysteine 85 is the Nucleophile of the active site. Active-site residues include histidine 175 and glutamate 177. The 192-residue stretch at 202-393 folds into the GMPS ATP-PPase domain; it reads WSMAAYRDQA…LGLPEEFIKR (192 aa). 229–235 contacts ATP; that stretch reads SGGVDSS.

As to quaternary structure, homodimer.

The catalysed reaction is XMP + L-glutamine + ATP + H2O = GMP + L-glutamate + AMP + diphosphate + 2 H(+). It functions in the pathway purine metabolism; GMP biosynthesis; GMP from XMP (L-Gln route): step 1/1. Its function is as follows. Catalyzes the synthesis of GMP from XMP. The protein is GMP synthase [glutamine-hydrolyzing] of Bartonella bacilliformis (strain ATCC 35685 / KC583 / Herrer 020/F12,63).